Here is a 354-residue protein sequence, read N- to C-terminus: Isopentenyl-diphosphate delta-isomerase (354 aa).

11–12 contributes to the substrate binding site; it reads KK. Residues serine 67, 68 to 70, serine 98, and asparagine 126 each bind FMN; that span reads SMT. 98 to 100 is a substrate binding site; sequence SFK. Glutamine 160 is a substrate binding site. Mg(2+) is bound at residue glutamate 161. FMN contacts are provided by residues lysine 192, threonine 222, and 289–290; that span reads AA.

The protein belongs to the IPP isomerase type 2 family. As to quaternary structure, homooctamer. Dimer of tetramers. Requires FMN as cofactor. NADPH is required as a cofactor. It depends on Mg(2+) as a cofactor.

It localises to the cytoplasm. It catalyses the reaction isopentenyl diphosphate = dimethylallyl diphosphate. In terms of biological role, involved in the biosynthesis of isoprenoids. Catalyzes the 1,3-allylic rearrangement of the homoallylic substrate isopentenyl (IPP) to its allylic isomer, dimethylallyl diphosphate (DMAPP). The protein is Isopentenyl-diphosphate delta-isomerase of Borreliella afzelii (strain PKo) (Borrelia afzelii).